Reading from the N-terminus, the 193-residue chain is dCTP deaminase (193 aa).

DCTP-binding positions include 110-115 (RSSLAR), aspartate 128, 136-138 (VLE), tyrosine 171, lysine 178, and glutamine 182. Glutamate 138 acts as the Proton donor/acceptor in catalysis. The interval 169-193 (RPYNRRQDAKYRDQQGAVASRIDKD) is disordered.

The protein belongs to the dCTP deaminase family. Homotrimer.

The catalysed reaction is dCTP + H2O + H(+) = dUTP + NH4(+). Its pathway is pyrimidine metabolism; dUMP biosynthesis; dUMP from dCTP (dUTP route): step 1/2. Its function is as follows. Catalyzes the deamination of dCTP to dUTP. The polypeptide is dCTP deaminase (Citrobacter koseri (strain ATCC BAA-895 / CDC 4225-83 / SGSC4696)).